A 1997-amino-acid polypeptide reads, in one-letter code: Protein MOR1 (1997 aa).

HEAT repeat units lie at residues 48 to 86 and 164 to 202; these read DARL…AADA and VVPP…WIGK. Residues 236–264 are disordered; that stretch reads RKIRSEQEKELEEEVVPEAAGTNNSEEAV. 3 HEAT repeats span residues 321 to 359, 362 to 400, and 441 to 479; these read PGDF…GLRT, SGNS…SGCI, and LKLH…MVGM. A disordered region spans residues 501–576; it reads IGSASDTTSG…DGGPQSKASA (76 aa). The segment covering 504–520 has biased composition (polar residues); the sequence is ASDTTSGTVAASNTGVG. Residues 529 to 539 show a composition bias toward low complexity; the sequence is SSSMRRSAASM. HEAT repeat units lie at residues 848-886, 890-928, 931-969, and 1007-1045; these read EDIS…EAHK, PTGT…AMGP, EKSS…AAQL, and PSEA…ICGQ. A disordered region spans residues 1087-1115; it reads MSLPSKAGSKNNKHGPNDRGSNVSKAVSQ. HEAT repeat units follow at residues 1233 to 1259, 1260 to 1294, 1295 to 1332, and 1334 to 1372; these read TTCL…MLTE, AEAA…MVNI, YSLP…HHGT, and VSGL…NLGD. The segment covering 1400–1410 has biased composition (basic and acidic residues); sequence MDKRREGRPGD. The segment at 1400 to 1436 is disordered; sequence MDKRREGRPGDARAALRRSVRENGSDIAEQSGEAVSR. The HEAT 14 repeat unit spans residues 1539–1579; the sequence is RSCKYVLNTLMQTFQIKRLAHAVKEGTLDNLITELLLWLLD. Residues 1755–1776 form a disordered region; the sequence is MGQTHWGDAGSNNPNPSTHSTD. The segment covering 1764 to 1776 has biased composition (polar residues); it reads GSNNPNPSTHSTD.

The protein belongs to the TOG/XMAP215 family.

It localises to the cytoplasm. The protein resides in the cytoskeleton. Its function is as follows. Microtubule-associated protein that is essential for cortical microtubules organization and function. The protein is Protein MOR1 (MOR1) of Oryza sativa subsp. japonica (Rice).